Here is a 497-residue protein sequence, read N- to C-terminus: Histidine--tRNA ligase (497 aa).

This sequence belongs to the class-II aminoacyl-tRNA synthetase family. As to quaternary structure, homodimer.

Its subcellular location is the cytoplasm. It catalyses the reaction tRNA(His) + L-histidine + ATP = L-histidyl-tRNA(His) + AMP + diphosphate + H(+). The chain is Histidine--tRNA ligase from Dinoroseobacter shibae (strain DSM 16493 / NCIMB 14021 / DFL 12).